The sequence spans 148 residues: 3-dehydroquinate dehydratase (148 aa).

Tyr-24 functions as the Proton acceptor in the catalytic mechanism. Substrate contacts are provided by Asn-75, His-81, and Asp-88. His-101 (proton donor) is an active-site residue. Residues 102–103 (LS) and Arg-112 contribute to the substrate site.

It belongs to the type-II 3-dehydroquinase family. As to quaternary structure, homododecamer.

It carries out the reaction 3-dehydroquinate = 3-dehydroshikimate + H2O. It participates in metabolic intermediate biosynthesis; chorismate biosynthesis; chorismate from D-erythrose 4-phosphate and phosphoenolpyruvate: step 3/7. In terms of biological role, catalyzes a trans-dehydration via an enolate intermediate. This Sinorhizobium medicae (strain WSM419) (Ensifer medicae) protein is 3-dehydroquinate dehydratase.